A 627-amino-acid polypeptide reads, in one-letter code: Lactose permease (627 aa).

A permease region spans residues Met1 to Gln460. The next 12 membrane-spanning stretches (helical) occupy residues Ala13–Val33, Ile46–Leu66, Trp84–Gly104, Pro111–Phe131, Val159–Phe179, Trp193–Leu213, Leu244–Leu264, Leu281–Ala301, Leu309–Gly329, Val336–Ile356, Trp392–Ile412, and Val419–Phe439. Residues Asp493–Asn597 form the PTS EIIA type-1 domain. Phosphohistidine; by HPr is present on His545.

In the N-terminal section; belongs to the sodium:galactoside symporter (TC 2.A.2) family.

It is found in the cell membrane. In terms of biological role, responsible for transport of beta-galactosides into the cell, with the concomitant uptake of protons (symport system), and also for transport of homologous and heterologous exchange of beta-galactosides. The chain is Lactose permease (lacY) from Lactobacillus delbrueckii subsp. bulgaricus (strain ATCC 11842 / DSM 20081 / BCRC 10696 / JCM 1002 / NBRC 13953 / NCIMB 11778 / NCTC 12712 / WDCM 00102 / Lb 14).